Reading from the N-terminus, the 479-residue chain is MNFETIIGLEVHVELNTNSKIFSPSSAHFGEDPNANTNVIDWSFPGVLPVMNKGVIDAGIKAALALNMDIHKEMHFDRKNYFYPDNPKAYQISQFDEPIGYNGWIDIKLEDGSTKKIRIERAHLEEDAGKNTHGTDGYSYVDLNRQGVPLIEIVSEADMRSPEEAYAYLTALKEIIQYTGISDVKMEEGSMRVDANISLRPYGQEQFGTKTELKNLNSFSNVRKGLEFEVERQAKLLRSGGVIRQETRRYDEANKGTILMRVKEGAADYRYFPEPDLPLYEIDDAWIDEMRAQLPQFPAQRRAKYEEELGLSAYDASQLTATKVLSDFFETAVSLGGDAKQVSNWLQGEVAQFLNAEGKTIEEIALTPENLVEMIAIIADGTISSKMAKKVFVHLAKNGGSARAYVEKAGLVQISDPAVLVPIIHQVFADNEAAVADFKSGKRNADKAFTGFLMKATKGQANPQVAQQLLAQELQKLRD.

Belongs to the GatB/GatE family. GatB subfamily. As to quaternary structure, heterotrimer of A, B and C subunits.

It carries out the reaction L-glutamyl-tRNA(Gln) + L-glutamine + ATP + H2O = L-glutaminyl-tRNA(Gln) + L-glutamate + ADP + phosphate + H(+). The enzyme catalyses L-aspartyl-tRNA(Asn) + L-glutamine + ATP + H2O = L-asparaginyl-tRNA(Asn) + L-glutamate + ADP + phosphate + 2 H(+). In terms of biological role, allows the formation of correctly charged Asn-tRNA(Asn) or Gln-tRNA(Gln) through the transamidation of misacylated Asp-tRNA(Asn) or Glu-tRNA(Gln) in organisms which lack either or both of asparaginyl-tRNA or glutaminyl-tRNA synthetases. The reaction takes place in the presence of glutamine and ATP through an activated phospho-Asp-tRNA(Asn) or phospho-Glu-tRNA(Gln). The chain is Aspartyl/glutamyl-tRNA(Asn/Gln) amidotransferase subunit B from Streptococcus pyogenes serotype M1.